The sequence spans 74 residues: Ferredoxin-like protein in nif region (74 aa).

Residues 2-30 (PFKIIASQCTSCSACEPLCPNVAISEKGG) form the 4Fe-4S ferredoxin-type domain. Residues Cys10, Cys13, Cys16, Cys20, Cys39, Cys51, and Cys55 each coordinate [4Fe-4S] cluster.

The cofactor is [4Fe-4S] cluster.

The sequence is that of Ferredoxin-like protein in nif region (frxA) from Bradyrhizobium diazoefficiens (strain JCM 10833 / BCRC 13528 / IAM 13628 / NBRC 14792 / USDA 110).